We begin with the raw amino-acid sequence, 432 residues long: Amino-acid acetyltransferase (432 aa).

The N-acetyltransferase domain occupies 286 to 425 (ESLREATIED…ASLYNYQRNS (140 aa)).

It belongs to the acetyltransferase family. ArgA subfamily.

The protein localises to the cytoplasm. It carries out the reaction L-glutamate + acetyl-CoA = N-acetyl-L-glutamate + CoA + H(+). The protein operates within amino-acid biosynthesis; L-arginine biosynthesis; N(2)-acetyl-L-ornithine from L-glutamate: step 1/4. The sequence is that of Amino-acid acetyltransferase from Ectopseudomonas mendocina (strain ymp) (Pseudomonas mendocina).